A 282-amino-acid chain; its full sequence is Bacterial lipoprotein FTN_1103 (282 aa).

The N-terminal stretch at 1 to 28 is a signal peptide; that stretch reads MKYGNLMMTKKKLLIGMVTISGIVILGS. The N-palmitoyl cysteine moiety is linked to residue Cys29. A lipid anchor (S-diacylglycerol cysteine) is attached at Cys29.

Its subcellular location is the cell membrane. In terms of biological role, stimulates the host immune inflammatory signaling system allowing the host to combat the bacteria. Stimulates mouse interleukin-6 (Il6) production. The polypeptide is Bacterial lipoprotein FTN_1103 (Francisella tularensis subsp. novicida (strain U112)).